The sequence spans 251 residues: CDP-diacylglycerol pyrophosphatase (251 aa).

Residues 4–24 (AGLLFLVMIVIAVVAAGIGYW) form a helical membrane-spanning segment.

The protein belongs to the Cdh family.

It localises to the cell inner membrane. The catalysed reaction is a CDP-1,2-diacyl-sn-glycerol + H2O = a 1,2-diacyl-sn-glycero-3-phosphate + CMP + 2 H(+). It functions in the pathway phospholipid metabolism; CDP-diacylglycerol degradation; phosphatidate from CDP-diacylglycerol: step 1/1. The chain is CDP-diacylglycerol pyrophosphatase from Escherichia coli (strain K12 / MC4100 / BW2952).